Consider the following 375-residue polypeptide: E3 ubiquitin-protein ligase RNF34 (375 aa).

Residues 56–107 (EGPNIVCKACGLSFSVFRKKHVCCDCKKDFCSVCSVLQENLRRCSTCHLLQE) form an FYVE-type zinc finger. The SAP 1 domain occupies 115–134 (LMRLKVKDLRQYLILRNIPI). S169 carries the post-translational modification Phosphoserine. The disordered stretch occupies residues 202–250 (RTLGSGALAQEPSEIASANTEDDEDDDDDDDDDDDDDEENLEDRTPGLT). Acidic residues predominate over residues 221 to 242 (TEDDEDDDDDDDDDDDDDEENL). Phosphoserine is present on residues S257 and S259. One can recognise an SAP 2 domain in the interval 267–281 (VEGMSVRQLKEILAR). The RING-type zinc finger occupies 328–363 (CRICMDAVIDCVLLECGHMVTCTKCGKRMSECPICR).

As to quaternary structure, interacts with CASP8 and CASP10. Interacts with p53/TP53; involved in p53/TP53 ubiquitination. Interacts (via RING-type zinc finger) with MDM2; the interaction stabilizes MDM2. Interacts (via RING-type zinc finger) with PPARGC1A. Interacts with NOD1. Autoubiquitinated (in vitro). Post-translationally, proteolytically cleaved by caspases upon induction of apoptosis by TNF.

The protein resides in the cell membrane. The protein localises to the endomembrane system. It localises to the nucleus. Its subcellular location is the nucleus speckle. It is found in the cytoplasm. The protein resides in the cytosol. The catalysed reaction is S-ubiquitinyl-[E2 ubiquitin-conjugating enzyme]-L-cysteine + [acceptor protein]-L-lysine = [E2 ubiquitin-conjugating enzyme]-L-cysteine + N(6)-ubiquitinyl-[acceptor protein]-L-lysine.. Its pathway is protein modification; protein ubiquitination. E3 ubiquitin-protein ligase that regulates several biological processes through the ubiquitin-mediated proteasomal degradation of various target proteins. Ubiquitinates the caspases CASP8 and CASP10, promoting their proteasomal degradation, to negatively regulate cell death downstream of death domain receptors in the extrinsic pathway of apoptosis. May mediate 'Lys-48'-linked polyubiquitination of RIPK1 and its subsequent proteasomal degradation thereby indirectly regulating the tumor necrosis factor-mediated signaling pathway. Negatively regulates p53/TP53 through its direct ubiquitination and targeting to proteasomal degradation. Indirectly, may also negatively regulate p53/TP53 through ubiquitination and degradation of SFN. Mediates PPARGC1A proteasomal degradation probably through ubiquitination thereby indirectly regulating the metabolism of brown fat cells. Possibly involved in innate immunity, through 'Lys-48'-linked polyubiquitination of NOD1 and its subsequent proteasomal degradation. This is E3 ubiquitin-protein ligase RNF34 (RNF34) from Bos taurus (Bovine).